A 585-amino-acid polypeptide reads, in one-letter code: Zinc finger protein C11D3.17 (585 aa).

2 consecutive C2H2-type zinc fingers follow at residues 31-53 (FPCD…KACH) and 59-82 (IPCP…QRFH). Thr-553 is modified (phosphothreonine).

It is found in the nucleus. The sequence is that of Zinc finger protein C11D3.17 from Schizosaccharomyces pombe (strain 972 / ATCC 24843) (Fission yeast).